A 628-amino-acid chain; its full sequence is Eukaryotic peptide chain release factor GTP-binding subunit ERF3B (628 aa).

Residues 1-10 (MDSGSSSSDS) show a composition bias toward low complexity. Disordered regions lie at residues 1 to 44 (MDSG…REPL), 71 to 124 (SFLR…LEGS), and 146 to 191 (LEES…KSKS). In terms of domain architecture, tr-type G spans 201-425 (KEHVNVVFIG…YLDNLPNFNR (225 aa)). The tract at residues 210 to 217 (GHVDAGKS) is G1. Residue 213–218 (DAGKST) participates in GTP binding. The interval 266–270 (GKTVE) is G2. Residues 287-290 (DAPG) form a G3 region. GTP is bound by residues 349-352 (NKMD) and 391-393 (SGL). Residues 349 to 352 (NKMD) are G4. The G5 stretch occupies residues 391–393 (SGL).

This sequence belongs to the TRAFAC class translation factor GTPase superfamily. Classic translation factor GTPase family. ERF3 subfamily. In terms of assembly, component of the eRF1-eRF3-GTP ternary complex, composed of ETF1/ERF1 and ERF3 (GSPT1/ERF3A or GSPT2/ERF3B) and GTP. Component of the transient SURF (SMG1-UPF1-eRF1-eRF3) complex. Interacts with UPF1 and PABPC1.

The protein localises to the cytoplasm. The catalysed reaction is GTP + H2O = GDP + phosphate + H(+). Its function is as follows. GTPase component of the eRF1-eRF3-GTP ternary complex, a ternary complex that mediates translation termination in response to the termination codons UAA, UAG and UGA. GSPT2/ERF3B mediates ETF1/ERF1 delivery to stop codons: The eRF1-eRF3-GTP complex binds to a stop codon in the ribosomal A-site. GTP hydrolysis by GSPT2/ERF3B induces a conformational change that leads to its dissociation, permitting ETF1/ERF1 to accommodate fully in the A-site. Component of the transient SURF complex which recruits UPF1 to stalled ribosomes in the context of nonsense-mediated decay (NMD) of mRNAs containing premature stop codons. The protein is Eukaryotic peptide chain release factor GTP-binding subunit ERF3B (GSPT2) of Pongo abelii (Sumatran orangutan).